Consider the following 530-residue polypeptide: MTEVVAVPVRLRPSATAGVRLPELVAQVGAVLADGPGQAATVPDIPVTGVTLRAQEVLSGDLFAALAGASTHGARYAGVALERGAVAVLTDVAGVAELTAQASSVPILIHPEPRSVLGGLAAAAYGHPSNRMTVVGITGTSGKTTTTYMVEAGLRAGGRVVGLVGTIGIRIDGADIPSFLTTPEAPALQAMLAAMVERGVETVVMEVSSHALSLGRVEGTQFAVAGFTNLSRDHLDFHPDMEEYFEAKAVLFDPHSLLRARTVVVCIDDDAGRATAARAGDAITVSALGQPASWRATDIRSPGVGAQEFTAVDPAGVQHRVGIRLPGRYNVANCLVALAILDVVGVSPEQASLGFRDIRIPGRLERIDCGQDFLALVDYAHKPGALHSVLTALLQPDHRLAVVFGAGGERDPGKRAPMGEIAAELADLVVVTDDNPRGEDPAAIRRDILTGTVAAGGAAQVVEIGDRRAAIQYAVAWAGPDDVVLVAGKGHETGQRGAAETCPFDDRVELARALQVRDARLLPAPGRACQ.

Leu52 contacts UDP-N-acetyl-alpha-D-muramoyl-L-alanyl-D-glutamate. Position 139–145 (Gly139–Thr145) interacts with ATP. Residues Thr181–Thr182, Ser208, and Arg216 contribute to the UDP-N-acetyl-alpha-D-muramoyl-L-alanyl-D-glutamate site. Lys248 is subject to N6-carboxylysine. Meso-2,6-diaminopimelate contacts are provided by residues Arg410, Asp434–Arg437, Gly488, and Glu492. The Meso-diaminopimelate recognition motif signature appears at Asp434–Arg437.

Belongs to the MurCDEF family. MurE subfamily. Mg(2+) is required as a cofactor. Post-translationally, carboxylation is probably crucial for Mg(2+) binding and, consequently, for the gamma-phosphate positioning of ATP.

The protein resides in the cytoplasm. The enzyme catalyses UDP-N-acetyl-alpha-D-muramoyl-L-alanyl-D-glutamate + meso-2,6-diaminopimelate + ATP = UDP-N-acetyl-alpha-D-muramoyl-L-alanyl-gamma-D-glutamyl-meso-2,6-diaminopimelate + ADP + phosphate + H(+). The protein operates within cell wall biogenesis; peptidoglycan biosynthesis. Its function is as follows. Catalyzes the addition of meso-diaminopimelic acid to the nucleotide precursor UDP-N-acetylmuramoyl-L-alanyl-D-glutamate (UMAG) in the biosynthesis of bacterial cell-wall peptidoglycan. This is UDP-N-acetylmuramoyl-L-alanyl-D-glutamate--2,6-diaminopimelate ligase from Mycobacterium leprae (strain TN).